Reading from the N-terminus, the 560-residue chain is Kinesin light chain 1 (560 aa).

A coiled-coil region spans residues 27-156; that stretch reads KTKQVIQGLE…HLEFMNQLKK (130 aa). Positions 156–176 are enriched in basic and acidic residues; that stretch reads KYDDDISPSEDKDSDSSKEPL. A disordered region spans residues 156-203; that stretch reads KYDDDISPSEDKDSDSSKEPLDDLFPNDEDDPGQGIQQQHSSAAAAAQ. Ser-162 bears the Phosphoserine mark. Low complexity predominate over residues 188 to 203; that stretch reads GQGIQQQHSSAAAAAQ. 5 TPR repeats span residues 213–246, 255–288, 297–330, 339–372, and 381–414; these read LRTL…LEKT, ATML…REKT, AATL…REKV, AKQL…YQTK, and AKTK…AHER. Tyr-449 carries the post-translational modification Phosphotyrosine. Ser-460 is modified (phosphoserine). The TPR 6 repeat unit spans residues 464–497; that stretch reads TTTLKNLGALYRRQGKFEAAETLEEAALRSRKQG. Phosphoserine is present on residues Ser-521 and Ser-524.

Belongs to the kinesin light chain family. As to quaternary structure, oligomeric complex composed of two heavy chains and two light chains. Interacts with SPAG9. Interacts with ATCAY; may link mitochondria to KLC1 and regulate mitochondria localization into neuron projections. Interacts (via TPR repeats) with TOR1A; the interaction associates TOR1A with the kinesin oligomeric complex. Interacts with BORCS5. Interacts with MAPK8IP3/JIP3 and NTRK2/TRKB; interaction with NTRK2/TRKB is mediated by MAPK8IP3/JIP3. Interacts with CLSTN1; phosphorylation at Ser-460 inhibits interaction with CLSTN1. Post-translationally, phosphorylation at Ser-460 by ERK inhibits interaction with CLSTN1 and localization to cytoplasmic vesicles. Expressed in brain (at protein level).

The protein resides in the cell projection. The protein localises to the growth cone. Its subcellular location is the cytoplasmic vesicle. It localises to the cytoplasm. It is found in the cytoskeleton. Functionally, kinesin is a microtubule-associated force-producing protein that may play a role in organelle transport. The light chain may function in coupling of cargo to the heavy chain or in the modulation of its ATPase activity. This Rattus norvegicus (Rat) protein is Kinesin light chain 1 (Klc1).